Reading from the N-terminus, the 325-residue chain is Ribose-phosphate pyrophosphokinase (325 aa).

Residues 45-47 (NGE) and 104-105 (RQ) each bind ATP. 2 residues coordinate Mg(2+): His-138 and Asp-178. The active site involves Lys-202. D-ribose 5-phosphate is bound by residues Arg-204, Asp-230, and 234 to 238 (DTGGT).

This sequence belongs to the ribose-phosphate pyrophosphokinase family. Class I subfamily. As to quaternary structure, homohexamer. Requires Mg(2+) as cofactor.

It localises to the cytoplasm. The catalysed reaction is D-ribose 5-phosphate + ATP = 5-phospho-alpha-D-ribose 1-diphosphate + AMP + H(+). Its pathway is metabolic intermediate biosynthesis; 5-phospho-alpha-D-ribose 1-diphosphate biosynthesis; 5-phospho-alpha-D-ribose 1-diphosphate from D-ribose 5-phosphate (route I): step 1/1. Its function is as follows. Involved in the biosynthesis of the central metabolite phospho-alpha-D-ribosyl-1-pyrophosphate (PRPP) via the transfer of pyrophosphoryl group from ATP to 1-hydroxyl of ribose-5-phosphate (Rib-5-P). This chain is Ribose-phosphate pyrophosphokinase, found in Corynebacterium glutamicum (strain ATCC 13032 / DSM 20300 / JCM 1318 / BCRC 11384 / CCUG 27702 / LMG 3730 / NBRC 12168 / NCIMB 10025 / NRRL B-2784 / 534).